A 301-amino-acid polypeptide reads, in one-letter code: tRNA uridine(34) hydroxylase (301 aa).

In terms of domain architecture, Rhodanese spans 121–212 (NDKDTLVLDS…YLKNIKKKES (92 aa)). Cys-172 (cysteine persulfide intermediate) is an active-site residue.

The protein belongs to the TrhO family.

It catalyses the reaction uridine(34) in tRNA + AH2 + O2 = 5-hydroxyuridine(34) in tRNA + A + H2O. In terms of biological role, catalyzes oxygen-dependent 5-hydroxyuridine (ho5U) modification at position 34 in tRNAs. The sequence is that of tRNA uridine(34) hydroxylase from Pelagibacter ubique (strain HTCC1062).